Consider the following 375-residue polypeptide: Queuine tRNA-ribosyltransferase (375 aa).

The active-site Proton acceptor is the aspartate 89. Substrate-binding positions include 89-93, aspartate 143, glutamine 187, and glycine 214; that span reads DSGGF. The tract at residues 245 to 251 is RNA binding; the sequence is GVGKPED. The active-site Nucleophile is aspartate 264. The interval 269 to 273 is RNA binding; important for wobble base 34 recognition; it reads TRNAR. Residues cysteine 302, cysteine 304, cysteine 307, and histidine 333 each contribute to the Zn(2+) site.

Belongs to the queuine tRNA-ribosyltransferase family. As to quaternary structure, homodimer. Within each dimer, one monomer is responsible for RNA recognition and catalysis, while the other monomer binds to the replacement base PreQ1. It depends on Zn(2+) as a cofactor.

The catalysed reaction is 7-aminomethyl-7-carbaguanine + guanosine(34) in tRNA = 7-aminomethyl-7-carbaguanosine(34) in tRNA + guanine. Its pathway is tRNA modification; tRNA-queuosine biosynthesis. Catalyzes the base-exchange of a guanine (G) residue with the queuine precursor 7-aminomethyl-7-deazaguanine (PreQ1) at position 34 (anticodon wobble position) in tRNAs with GU(N) anticodons (tRNA-Asp, -Asn, -His and -Tyr). Catalysis occurs through a double-displacement mechanism. The nucleophile active site attacks the C1' of nucleotide 34 to detach the guanine base from the RNA, forming a covalent enzyme-RNA intermediate. The proton acceptor active site deprotonates the incoming PreQ1, allowing a nucleophilic attack on the C1' of the ribose to form the product. After dissociation, two additional enzymatic reactions on the tRNA convert PreQ1 to queuine (Q), resulting in the hypermodified nucleoside queuosine (7-(((4,5-cis-dihydroxy-2-cyclopenten-1-yl)amino)methyl)-7-deazaguanosine). The sequence is that of Queuine tRNA-ribosyltransferase from Salmonella enteritidis PT4 (strain P125109).